The sequence spans 365 residues: Chorismate synthase (365 aa).

Arg46 is an NADP(+) binding site. Residues 123–125 (RSS), 241–242 (NG), Gly281, 296–300 (KPTPS), and Arg322 each bind FMN.

This sequence belongs to the chorismate synthase family. As to quaternary structure, homotetramer. FMNH2 is required as a cofactor.

The catalysed reaction is 5-O-(1-carboxyvinyl)-3-phosphoshikimate = chorismate + phosphate. It functions in the pathway metabolic intermediate biosynthesis; chorismate biosynthesis; chorismate from D-erythrose 4-phosphate and phosphoenolpyruvate: step 7/7. Catalyzes the anti-1,4-elimination of the C-3 phosphate and the C-6 proR hydrogen from 5-enolpyruvylshikimate-3-phosphate (EPSP) to yield chorismate, which is the branch point compound that serves as the starting substrate for the three terminal pathways of aromatic amino acid biosynthesis. This reaction introduces a second double bond into the aromatic ring system. This chain is Chorismate synthase, found in Helicobacter pylori (strain Shi470).